A 189-amino-acid chain; its full sequence is Small ribosomal subunit protein uS5 (189 aa).

The S5 DRBM domain maps to 22-85 (LIDKLVTINR…ERAKRGMIRV (64 aa)). The interval 164–189 (SVASRRGKKVADLFGPKREKEAPADV) is disordered. Positions 172-189 (KVADLFGPKREKEAPADV) are enriched in basic and acidic residues.

The protein belongs to the universal ribosomal protein uS5 family. In terms of assembly, part of the 30S ribosomal subunit. Contacts proteins S4 and S8.

In terms of biological role, with S4 and S12 plays an important role in translational accuracy. Located at the back of the 30S subunit body where it stabilizes the conformation of the head with respect to the body. This Acidiphilium cryptum (strain JF-5) protein is Small ribosomal subunit protein uS5.